We begin with the raw amino-acid sequence, 910 residues long: Periodic tryptophan protein 2 homolog (910 aa).

WD repeat units follow at residues 12-50, 53-92, 94-134, 144-183, 188-227, 271-310, 313-355, 358-397, 400-439, 443-485, 486-523, 525-563, 586-625, and 688-728; these read GTVY…SKTL, DCNY…KIYT, RSNK…KVYN, LSSD…NLFI, SHKG…GELV, GKSV…LVHN, VSEM…YVMK, AHSL…CTVT, EHTS…NFRT, PEPT…DILS, GHES…AETV, VSHE…NLGS, AKTK…ILKK, and RPEV…DPFQ. The disordered stretch occupies residues 867–910; the sequence is SKKSVKKEEEEEEDVSDESDDEDIEDESAGSDDEDSDDSVEIIE. Residues 875-910 show a composition bias toward acidic residues; the sequence is EEEEEDVSDESDDEDIEDESAGSDDEDSDDSVEIIE.

It belongs to the WD repeat PWP2 family.

This Caenorhabditis elegans protein is Periodic tryptophan protein 2 homolog.